A 267-amino-acid polypeptide reads, in one-letter code: 2-keto-3-deoxy-L-rhamnonate aldolase (267 aa).

His49 acts as the Proton acceptor in catalysis. A substrate-binding site is contributed by Gln151. Residue Glu153 coordinates Mg(2+). Positions 178 and 179 each coordinate substrate. Residue Asp179 coordinates Mg(2+).

Belongs to the HpcH/HpaI aldolase family. KDR aldolase subfamily. As to quaternary structure, homohexamer. Mg(2+) is required as a cofactor.

It carries out the reaction 2-dehydro-3-deoxy-L-rhamnonate = (S)-lactaldehyde + pyruvate. In terms of biological role, catalyzes the reversible retro-aldol cleavage of 2-keto-3-deoxy-L-rhamnonate (KDR) to pyruvate and lactaldehyde. The polypeptide is 2-keto-3-deoxy-L-rhamnonate aldolase (Escherichia coli O6:K15:H31 (strain 536 / UPEC)).